Here is a 152-residue protein sequence, read N- to C-terminus: MKKLSEFGKGLYVAAKFSESTLDALEELQRSLKLPNPVPRDKLHTTIVYSRVNVPYKVASGSFEIADKGKLTVFETQSGNRALVLEMDSDYLSARHSYAKALGASYDYPDYRPHITLSYNIGVLNFSGEYKVPVVLDREYSEELDLEWSDKD.

Tyr12 is a 3',3'-cGAMP binding site. Tyr12 provides a ligand contact to 3',3'-cUAMP. Active-site residues include His44 and Thr46. 3',3'-cGAMP-binding residues include Phe74 and Tyr108. 2 residues coordinate 3',3'-cUAMP: Phe74 and Tyr108. Residues His114 and Thr116 contribute to the active site. 3',3'-cGAMP-binding residues include Glu142 and Trp148. Positions 142 and 148 each coordinate 3',3'-cUAMP.

It belongs to the anti-CBASS protein Acb1 family.

The enzyme catalyses 3',3'-cUAMP + H2O = U[3'-5']pAp[3'] + H(+). It carries out the reaction 3',3',3'-c-tri-AMP + H2O = A[3'-5']pA[3'-5']pAp[3'] + H(+). The catalysed reaction is 3',3',3'-cAAG + H2O = G[3'-5']pA[3'-5']pAp[3'] + H(+). It catalyses the reaction 3',3',3'-cAAG + H2O = A[3'-5']pG[3'-5']pAp[3'] + H(+). The enzyme catalyses 3',3'-cGAMP + H2O = G[3'-5']pAp[3'] + H(+). Counteracts the host CBASS antiviral defense system. Phosphodiesterase that enables metal-independent hydrolysis of the host cyclic di- and trinucleotide CBASS signals such as 3'3'-cGAMP, 3'3'cUA, and 3'3'3'-cAAA. Does not cleave cGG or cA4. Besides evasion of the CBASS system, might also enable evasion of the type III CRISPR systems that use cA3 signals. This Erwinia tracheiphila protein is Anti-CBASS protein Acb1.